The sequence spans 1045 residues: Probable sucrose-phosphate synthase (1045 aa).

2 stretches are compositionally biased toward basic and acidic residues: residues 93–115 (ENEEAQRKTKRRMELERGRREAT) and 124–137 (EGEKDISAHGDSTR). Disordered stretches follow at residues 93–141 (ENEE…PRLP), 222–243 (WSYGEPTEMLNPRDSNGFDDDD), and 662–692 (IASSRQRQPQWQRSSDEGLDNQEPESPSDSL). Residues 664–674 (SSRQRQPQWQR) are compositionally biased toward low complexity.

The protein belongs to the glycosyltransferase 1 family. In terms of assembly, homodimer or homotetramer. Predominantly active in tap root.

It carries out the reaction beta-D-fructose 6-phosphate + UDP-alpha-D-glucose = sucrose 6(F)-phosphate + UDP + H(+). Its pathway is glycan biosynthesis; sucrose biosynthesis; sucrose from D-fructose 6-phosphate and UDP-alpha-D-glucose: step 1/2. Activity is regulated by phosphorylation and moderated by concentration of metabolites and light. Plays a role in photosynthetic sucrose synthesis by catalyzing the rate-limiting step of sucrose biosynthesis from UDP-glucose and fructose- 6-phosphate. Involved in the regulation of carbon partitioning in the leaves of plants. May regulate the synthesis of sucrose and therefore play a major role as a limiting factor in the export of photoassimilates out of the leaf. Plays a role for sucrose availability that is essential for plant growth and fiber elongation. This is Probable sucrose-phosphate synthase (SPS) from Beta vulgaris (Sugar beet).